The primary structure comprises 558 residues: MAFAVSVQSHFAIRALKRDHFKNPSPRTFCSCFKSRPDSSYLSLKERTCFVSKPGLVTTRYRHIFQVGAETGGEFADSGEVADSLASDAPESFSWSSVILPFIFPALGGLLFGYDIGATSGATLSLQSPALSGTTWFNFSPVQLGLVVSGSLYGALLGSISVYGVADFLGRRRELIIAAVLYLLGSLITGCAPDLNILLVGRLLYGFGIGLAMHGAPLYIAETCPSQIRGTLISLKELFIVLGILLGFSVGSFQIDVVGGWRYMYGFGTPVALLMGLGMWSLPASPRWLLLRAVQGKGQLQEYKEKAMLALSKLRGRPPGDKISEKLVDDAYLSVKTAYEDEKSGGNFLEVFQGPNLKALTIGGGLVLFQQITGQPSVLYYAGSILQTAGFSAAADATRVSVIIGVFKLLMTWVAVAKVDDLGRRPLLIGGVSGIALSLFLLSAYYKFLGGFPLVAVGALLLYVGCYQISFGPISWLMVSEIFPLRTRGRGISLAVLTNFGSNAIVTFAFSPLKEFLGAENLFLLFGGIALVSLLFVILVVPETKGLSLEEIESKILK.

A chloroplast-targeting transit peptide spans 1–31 (MAFAVSVQSHFAIRALKRDHFKNPSPRTFCS). The next 12 membrane-spanning stretches (helical) occupy residues 98–118 (VILP…DIGA), 146–166 (LVVS…YGVA), 175–195 (LIIA…APDL), 197–217 (ILLV…HGAP), 238–258 (LFIV…IDVV), 264–284 (MYGF…SLPA), 359–379 (ALTI…PSVL), 400–420 (VSVI…AKVD), 426–446 (PLLI…SAYY), 449–469 (LGGF…CYQI), 491–511 (GISL…FAFS), and 522–542 (LFLL…LVVP).

The protein belongs to the major facilitator superfamily. Sugar transporter (TC 2.A.1.1) family.

It localises to the plastid. The protein localises to the chloroplast membrane. This Arabidopsis thaliana (Mouse-ear cress) protein is D-xylose-proton symporter-like 3, chloroplastic.